A 175-amino-acid chain; its full sequence is Putative FAS1 domain-containing protein 081L (175 aa).

Residues 28 to 172 form the FAS1 domain; sequence GPIVPSVWTI…GLVHIVDQFP (145 aa).

This chain is Putative FAS1 domain-containing protein 081L, found in Invertebrate iridescent virus 3 (IIV-3).